The chain runs to 557 residues: Dihydroxy-acid dehydratase (557 aa).

Mg(2+) is bound at residue Asp-78. Position 119 (Cys-119) interacts with [2Fe-2S] cluster. Residues Asp-120 and Lys-121 each coordinate Mg(2+). Lys-121 carries the post-translational modification N6-carboxylysine. A [2Fe-2S] cluster-binding site is contributed by Cys-192. Glu-442 contacts Mg(2+). The active-site Proton acceptor is the Ser-468.

Belongs to the IlvD/Edd family. In terms of assembly, homodimer. Requires [2Fe-2S] cluster as cofactor. It depends on Mg(2+) as a cofactor.

The enzyme catalyses (2R)-2,3-dihydroxy-3-methylbutanoate = 3-methyl-2-oxobutanoate + H2O. It catalyses the reaction (2R,3R)-2,3-dihydroxy-3-methylpentanoate = (S)-3-methyl-2-oxopentanoate + H2O. Its pathway is amino-acid biosynthesis; L-isoleucine biosynthesis; L-isoleucine from 2-oxobutanoate: step 3/4. It participates in amino-acid biosynthesis; L-valine biosynthesis; L-valine from pyruvate: step 3/4. Functionally, functions in the biosynthesis of branched-chain amino acids. Catalyzes the dehydration of (2R,3R)-2,3-dihydroxy-3-methylpentanoate (2,3-dihydroxy-3-methylvalerate) into 2-oxo-3-methylpentanoate (2-oxo-3-methylvalerate) and of (2R)-2,3-dihydroxy-3-methylbutanoate (2,3-dihydroxyisovalerate) into 2-oxo-3-methylbutanoate (2-oxoisovalerate), the penultimate precursor to L-isoleucine and L-valine, respectively. The chain is Dihydroxy-acid dehydratase from Bacillus mycoides (strain KBAB4) (Bacillus weihenstephanensis).